The following is a 45-amino-acid chain: Caltrin-like protein 1 (45 aa).

Positions 8 to 45 (DSDRPNCSRYVQHLYMCTKELDPVCGTDGHTYGNRSIF) constitute a Kazal-like domain. N-linked (GlcNAc...) asparagine glycosylation is found at N13 and N41.

Post-translationally, glycosylated.

It is found in the secreted. In terms of biological role, inhibits calcium transport into spermatozoa. The sequence is that of Caltrin-like protein 1 from Cavia porcellus (Guinea pig).